The primary structure comprises 91 residues: Elongation factor 1-beta (91 aa).

This sequence belongs to the EF-1-beta/EF-1-delta family.

Functionally, promotes the exchange of GDP for GTP in EF-1-alpha/GDP, thus allowing the regeneration of EF-1-alpha/GTP that could then be used to form the ternary complex EF-1-alpha/GTP/AAtRNA. In Thermofilum pendens (strain DSM 2475 / Hrk 5), this protein is Elongation factor 1-beta.